A 402-amino-acid chain; its full sequence is 4-hydroxy-3-methylbut-2-enyl diphosphate reductase (402 aa).

Residue Cys-66 coordinates [4Fe-4S] cluster. Position 96 (His-96) interacts with (2E)-4-hydroxy-3-methylbut-2-enyl diphosphate. His-96 lines the dimethylallyl diphosphate pocket. Isopentenyl diphosphate is bound at residue His-96. Cys-157 is a binding site for [4Fe-4S] cluster. His-185 provides a ligand contact to (2E)-4-hydroxy-3-methylbut-2-enyl diphosphate. His-185 provides a ligand contact to dimethylallyl diphosphate. His-185 lines the isopentenyl diphosphate pocket. The active-site Proton donor is the Glu-187. Residue Thr-250 participates in (2E)-4-hydroxy-3-methylbut-2-enyl diphosphate binding. Cys-288 is a binding site for [4Fe-4S] cluster. The (2E)-4-hydroxy-3-methylbut-2-enyl diphosphate site is built by Ser-317, Ser-318, Asn-319, and Ser-379. Residues Ser-317, Ser-318, Asn-319, and Ser-379 each coordinate dimethylallyl diphosphate. Residues Ser-317, Ser-318, Asn-319, and Ser-379 each contribute to the isopentenyl diphosphate site.

Belongs to the IspH family. It depends on [4Fe-4S] cluster as a cofactor.

It catalyses the reaction isopentenyl diphosphate + 2 oxidized [2Fe-2S]-[ferredoxin] + H2O = (2E)-4-hydroxy-3-methylbut-2-enyl diphosphate + 2 reduced [2Fe-2S]-[ferredoxin] + 2 H(+). The enzyme catalyses dimethylallyl diphosphate + 2 oxidized [2Fe-2S]-[ferredoxin] + H2O = (2E)-4-hydroxy-3-methylbut-2-enyl diphosphate + 2 reduced [2Fe-2S]-[ferredoxin] + 2 H(+). The protein operates within isoprenoid biosynthesis; dimethylallyl diphosphate biosynthesis; dimethylallyl diphosphate from (2E)-4-hydroxy-3-methylbutenyl diphosphate: step 1/1. It participates in isoprenoid biosynthesis; isopentenyl diphosphate biosynthesis via DXP pathway; isopentenyl diphosphate from 1-deoxy-D-xylulose 5-phosphate: step 6/6. Functionally, catalyzes the conversion of 1-hydroxy-2-methyl-2-(E)-butenyl 4-diphosphate (HMBPP) into a mixture of isopentenyl diphosphate (IPP) and dimethylallyl diphosphate (DMAPP). Acts in the terminal step of the DOXP/MEP pathway for isoprenoid precursor biosynthesis. The protein is 4-hydroxy-3-methylbut-2-enyl diphosphate reductase of Nostoc sp. (strain PCC 7120 / SAG 25.82 / UTEX 2576).